Here is a 524-residue protein sequence, read N- to C-terminus: Alanine aminotransferase 2 (524 aa).

The residue at position 342 (lysine 342) is an N6-(pyridoxal phosphate)lysine.

It belongs to the class-I pyridoxal-phosphate-dependent aminotransferase family. Alanine aminotransferase subfamily. Homodimer. Requires pyridoxal 5'-phosphate as cofactor.

The catalysed reaction is L-alanine + 2-oxoglutarate = pyruvate + L-glutamate. Its pathway is amino-acid degradation; L-alanine degradation via transaminase pathway; pyruvate from L-alanine: step 1/1. Catalyzes the reversible transamination between alanine and 2-oxoglutarate to form pyruvate and glutamate. The polypeptide is Alanine aminotransferase 2 (gpt2) (Xenopus tropicalis (Western clawed frog)).